Here is a 538-residue protein sequence, read N- to C-terminus: NAD(P)H-quinone oxidoreductase chain 4 (538 aa).

The next 14 helical transmembrane spans lie at 11–31, 43–63, 95–115, 119–139, 143–163, 175–195, 217–237, 251–271, 285–305, 314–334, 340–360, 382–404, 425–445, and 472–492; these read FPWL…VPFI, YALI…FKGF, MPLI…AWPV, PKLF…VFAV, LLFF…LAIW, FIIY…AMGF, GFQL…LPIV, TAPV…YALL, FAPL…LTSF, IAYS…SFSS, AMLQ…LVGA, IMFA…SGFI, IVVA…LLSM, and IYII…PKIM.

This sequence belongs to the complex I subunit 4 family.

It is found in the cellular thylakoid membrane. The enzyme catalyses a plastoquinone + NADH + (n+1) H(+)(in) = a plastoquinol + NAD(+) + n H(+)(out). It catalyses the reaction a plastoquinone + NADPH + (n+1) H(+)(in) = a plastoquinol + NADP(+) + n H(+)(out). Functionally, NDH-1 shuttles electrons from NAD(P)H, via FMN and iron-sulfur (Fe-S) centers, to quinones in the respiratory chain. The immediate electron acceptor for the enzyme in this species is believed to be plastoquinone. Couples the redox reaction to proton translocation (for every two electrons transferred, four hydrogen ions are translocated across the cytoplasmic membrane), and thus conserves the redox energy in a proton gradient. This Prochlorococcus marinus (strain NATL1A) protein is NAD(P)H-quinone oxidoreductase chain 4.